Here is a 423-residue protein sequence, read N- to C-terminus: Gamma-glutamyl phosphate reductase (423 aa).

Belongs to the gamma-glutamyl phosphate reductase family.

The protein localises to the cytoplasm. It catalyses the reaction L-glutamate 5-semialdehyde + phosphate + NADP(+) = L-glutamyl 5-phosphate + NADPH + H(+). It participates in amino-acid biosynthesis; L-proline biosynthesis; L-glutamate 5-semialdehyde from L-glutamate: step 2/2. Its function is as follows. Catalyzes the NADPH-dependent reduction of L-glutamate 5-phosphate into L-glutamate 5-semialdehyde and phosphate. The product spontaneously undergoes cyclization to form 1-pyrroline-5-carboxylate. The polypeptide is Gamma-glutamyl phosphate reductase (Desulfovibrio desulfuricans (strain ATCC 27774 / DSM 6949 / MB)).